We begin with the raw amino-acid sequence, 100 residues long: Urease subunit gamma (100 aa).

The protein belongs to the urease gamma subunit family. In terms of assembly, heterotrimer of UreA (gamma), UreB (beta) and UreC (alpha) subunits. Three heterotrimers associate to form the active enzyme.

It is found in the cytoplasm. The catalysed reaction is urea + 2 H2O + H(+) = hydrogencarbonate + 2 NH4(+). It participates in nitrogen metabolism; urea degradation; CO(2) and NH(3) from urea (urease route): step 1/1. This Thermosynechococcus vestitus (strain NIES-2133 / IAM M-273 / BP-1) protein is Urease subunit gamma.